We begin with the raw amino-acid sequence, 195 residues long: Shikimate kinase (195 aa).

21-26 (GTGKTS) is an ATP binding site. Position 25 (T25) interacts with Mg(2+). The substrate site is built by D43, R67, and G89. Residues 128–148 (REQRPSFSGKASTEISEETMR) form a disordered region. R131 is a binding site for ATP. Residues 132–141 (PSFSGKASTE) are compositionally biased toward polar residues. Residue R158 coordinates substrate.

It belongs to the shikimate kinase family. In terms of assembly, monomer. The cofactor is Mg(2+).

The protein localises to the cytoplasm. It carries out the reaction shikimate + ATP = 3-phosphoshikimate + ADP + H(+). Its pathway is metabolic intermediate biosynthesis; chorismate biosynthesis; chorismate from D-erythrose 4-phosphate and phosphoenolpyruvate: step 5/7. Its function is as follows. Catalyzes the specific phosphorylation of the 3-hydroxyl group of shikimic acid using ATP as a cosubstrate. The chain is Shikimate kinase from Syntrophus aciditrophicus (strain SB).